Reading from the N-terminus, the 217-residue chain is Protein GrpE (217 aa).

A compositionally biased stretch (basic and acidic residues) spans 1–10; that stretch reads MSDHAEHAAD. The segment at 1 to 39 is disordered; the sequence is MSDHAEHAADAADTDAPEGDDAGGDDGEQAGDDGTSALS. Over residues 12–31 the composition is skewed to acidic residues; the sequence is ADTDAPEGDDAGGDDGEQAG.

Belongs to the GrpE family. Homodimer.

It is found in the cytoplasm. Participates actively in the response to hyperosmotic and heat shock by preventing the aggregation of stress-denatured proteins, in association with DnaK and GrpE. It is the nucleotide exchange factor for DnaK and may function as a thermosensor. Unfolded proteins bind initially to DnaJ; upon interaction with the DnaJ-bound protein, DnaK hydrolyzes its bound ATP, resulting in the formation of a stable complex. GrpE releases ADP from DnaK; ATP binding to DnaK triggers the release of the substrate protein, thus completing the reaction cycle. Several rounds of ATP-dependent interactions between DnaJ, DnaK and GrpE are required for fully efficient folding. This chain is Protein GrpE, found in Halobacterium salinarum (strain ATCC 29341 / DSM 671 / R1).